A 204-amino-acid polypeptide reads, in one-letter code: Holliday junction branch migration complex subunit RuvA (204 aa).

The tract at residues Met-1–Gly-67 is domain I. Residues Ser-68–Asp-146 are domain II. The segment at Gln-147–Ile-157 is flexible linker. The domain III stretch occupies residues Ile-157–Pro-204.

The protein belongs to the RuvA family. Homotetramer. Forms an RuvA(8)-RuvB(12)-Holliday junction (HJ) complex. HJ DNA is sandwiched between 2 RuvA tetramers; dsDNA enters through RuvA and exits via RuvB. An RuvB hexamer assembles on each DNA strand where it exits the tetramer. Each RuvB hexamer is contacted by two RuvA subunits (via domain III) on 2 adjacent RuvB subunits; this complex drives branch migration. In the full resolvosome a probable DNA-RuvA(4)-RuvB(12)-RuvC(2) complex forms which resolves the HJ.

The protein resides in the cytoplasm. Functionally, the RuvA-RuvB-RuvC complex processes Holliday junction (HJ) DNA during genetic recombination and DNA repair, while the RuvA-RuvB complex plays an important role in the rescue of blocked DNA replication forks via replication fork reversal (RFR). RuvA specifically binds to HJ cruciform DNA, conferring on it an open structure. The RuvB hexamer acts as an ATP-dependent pump, pulling dsDNA into and through the RuvAB complex. HJ branch migration allows RuvC to scan DNA until it finds its consensus sequence, where it cleaves and resolves the cruciform DNA. This is Holliday junction branch migration complex subunit RuvA from Synechococcus sp. (strain JA-2-3B'a(2-13)) (Cyanobacteria bacterium Yellowstone B-Prime).